A 435-amino-acid polypeptide reads, in one-letter code: MAAQVADGVADLKLDDTKSKPTNGTTQNGDAEHEDSDDDNEGEEGAAEGGEGAAKKKKKRKPRKKKKAGAAGASGPKTQTKPPRVPVHEIFLNDSYPEGEIHEYLNENSYRTTSEEKRHLDRMNNDFLTDYRRGAEIHRTVRQWARDWIKPGMSLTEIAEGIEDSVRALTGHQGLEDGDAQIAGMGFPTGLSINHCAAHYTPNAGNKMVVNYEDVMKVDFGVHINGRIVDSAFTLTFDPVYDNLVEACKAATNAGIKEAGIDVRMSDIGAAIQEVMESYEVEIKGETFPVKCIRNLNGHSIGHYTIHGGKTVPIVKGGDQTKMEEGETFAIETFGSTGKGYVRDDMETSHYAKRSDAPKVALRVSSAKTLLNSITKNFGTLPFCRRYLDRLGHDKYLLGLNNLVSAGIVEAYPPLCDIKGSYTAQSEHVSFFPSV.

Positions 1-87 (MAAQVADGVA…TQTKPPRVPV (87 aa)) are disordered. A compositionally biased stretch (basic and acidic residues) spans 10–19 (ADLKLDDTKS). A compositionally biased stretch (polar residues) spans 20 to 29 (KPTNGTTQNG). Positions 32-46 (EHEDSDDDNEGEEGA) are enriched in acidic residues. The span at 55–68 (KKKKKRKPRKKKKA) shows a compositional bias: basic residues. Position 199 (His199) interacts with substrate. A divalent metal cation contacts are provided by Asp219, Asp230, and His299. Residue His307 coordinates substrate. A divalent metal cation is bound by residues Glu332 and Glu427.

The protein belongs to the peptidase M24A family. Methionine aminopeptidase eukaryotic type 2 subfamily. Co(2+) serves as cofactor. The cofactor is Zn(2+). It depends on Mn(2+) as a cofactor. Fe(2+) is required as a cofactor.

It localises to the cytoplasm. It catalyses the reaction Release of N-terminal amino acids, preferentially methionine, from peptides and arylamides.. In terms of biological role, cotranslationally removes the N-terminal methionine from nascent proteins. The N-terminal methionine is often cleaved when the second residue in the primary sequence is small and uncharged (Met-Ala-, Cys, Gly, Pro, Ser, Thr, or Val). The polypeptide is Methionine aminopeptidase 2 (Phaeosphaeria nodorum (strain SN15 / ATCC MYA-4574 / FGSC 10173) (Glume blotch fungus)).